The following is a 237-amino-acid chain: Uridylate kinase (237 aa).

ATP is bound at residue lysine 12 to glycine 15. The tract at residues glycine 20–glycine 25 is involved in allosteric activation by GTP. A UMP-binding site is contributed by glycine 54. 2 residues coordinate ATP: glycine 55 and arginine 59. UMP-binding positions include aspartate 72 and threonine 133–threonine 140. ATP is bound by residues tyrosine 166 and aspartate 169.

Belongs to the UMP kinase family. Homohexamer.

It is found in the cytoplasm. It catalyses the reaction UMP + ATP = UDP + ADP. Its pathway is pyrimidine metabolism; CTP biosynthesis via de novo pathway; UDP from UMP (UMPK route): step 1/1. Its activity is regulated as follows. Allosterically activated by GTP. Inhibited by UTP. Its function is as follows. Catalyzes the reversible phosphorylation of UMP to UDP. This Clostridium perfringens (strain ATCC 13124 / DSM 756 / JCM 1290 / NCIMB 6125 / NCTC 8237 / Type A) protein is Uridylate kinase.